The sequence spans 317 residues: Pantothenate kinase (317 aa).

Residue Gly99 to Ser106 coordinates ATP.

Belongs to the prokaryotic pantothenate kinase family.

The protein localises to the cytoplasm. It carries out the reaction (R)-pantothenate + ATP = (R)-4'-phosphopantothenate + ADP + H(+). The protein operates within cofactor biosynthesis; coenzyme A biosynthesis; CoA from (R)-pantothenate: step 1/5. This Histophilus somni (strain 2336) (Haemophilus somnus) protein is Pantothenate kinase.